Here is a 274-residue protein sequence, read N- to C-terminus: Formamidopyrimidine-DNA glycosylase (274 aa).

The active-site Schiff-base intermediate with DNA is P2. Catalysis depends on E3, which acts as the Proton donor. K57 (proton donor; for beta-elimination activity) is an active-site residue. 3 residues coordinate DNA: H92, R111, and K152. The segment at 237-271 adopts an FPG-type zinc-finger fold; that stretch reads QVYGRKGEECRECGTLIQAKVIGQRNSYFCPDCQP. The active-site Proton donor; for delta-elimination activity is the R261.

The protein belongs to the FPG family. As to quaternary structure, monomer. The cofactor is Zn(2+).

The enzyme catalyses Hydrolysis of DNA containing ring-opened 7-methylguanine residues, releasing 2,6-diamino-4-hydroxy-5-(N-methyl)formamidopyrimidine.. It catalyses the reaction 2'-deoxyribonucleotide-(2'-deoxyribose 5'-phosphate)-2'-deoxyribonucleotide-DNA = a 3'-end 2'-deoxyribonucleotide-(2,3-dehydro-2,3-deoxyribose 5'-phosphate)-DNA + a 5'-end 5'-phospho-2'-deoxyribonucleoside-DNA + H(+). Involved in base excision repair of DNA damaged by oxidation or by mutagenic agents. Acts as a DNA glycosylase that recognizes and removes damaged bases. Has a preference for oxidized purines, such as 7,8-dihydro-8-oxoguanine (8-oxoG). Has AP (apurinic/apyrimidinic) lyase activity and introduces nicks in the DNA strand. Cleaves the DNA backbone by beta-delta elimination to generate a single-strand break at the site of the removed base with both 3'- and 5'-phosphates. This is Formamidopyrimidine-DNA glycosylase from Haemophilus ducreyi (strain 35000HP / ATCC 700724).